Consider the following 275-residue polypeptide: Phosphatidylglycerol--prolipoprotein diacylglyceryl transferase (275 aa).

7 helical membrane-spanning segments follow: residues 22–42, 61–81, 96–116, 125–145, 177–197, 204–224, and 238–258; these read LSVR…MWLA, LLFY…VLFY, IWTG…AMIW, FFTV…VGRI, SQLY…NLFW, GAIS…VEFV, and ISMG…MVWA. R144 is a binding site for a 1,2-diacyl-sn-glycero-3-phospho-(1'-sn-glycerol).

Belongs to the Lgt family.

The protein resides in the cell inner membrane. It catalyses the reaction L-cysteinyl-[prolipoprotein] + a 1,2-diacyl-sn-glycero-3-phospho-(1'-sn-glycerol) = an S-1,2-diacyl-sn-glyceryl-L-cysteinyl-[prolipoprotein] + sn-glycerol 1-phosphate + H(+). It participates in protein modification; lipoprotein biosynthesis (diacylglyceryl transfer). Functionally, catalyzes the transfer of the diacylglyceryl group from phosphatidylglycerol to the sulfhydryl group of the N-terminal cysteine of a prolipoprotein, the first step in the formation of mature lipoproteins. The polypeptide is Phosphatidylglycerol--prolipoprotein diacylglyceryl transferase (Aeromonas salmonicida (strain A449)).